The following is a 159-amino-acid chain: U-actitoxin-Avd13a/b (159 aa).

An N-terminal signal peptide occupies residues Met1 to Ala18. Residues Gly19–Pro26 constitute a propeptide that is removed on maturation. 2 cysteine pairs are disulfide-bonded: Cys33/Cys45 and Cys36/Cys52. Residues Glu59 to Pro60 constitute a propeptide that is removed on maturation. 2 cysteine pairs are disulfide-bonded: Cys67–Cys79 and Cys70–Cys86. Residues Glu93–Pro94 constitute a propeptide that is removed on maturation. 2 cysteine pairs are disulfide-bonded: Cys101-Cys113 and Cys104-Cys120. Positions Glu127–Pro128 are excised as a propeptide. 2 disulfides stabilise this stretch: Cys135/Cys147 and Cys138/Cys154.

This sequence belongs to the sea anemone BBH family.

It localises to the secreted. Its subcellular location is the nematocyst. Inhibits ion channels. The protein is U-actitoxin-Avd13a/b of Anemonia viridis (Snakelocks anemone).